Reading from the N-terminus, the 368-residue chain is Germination protease (368 aa).

Residues 1–16 (MKKSELDVNQYLIRTD) constitute a propeptide that is removed on maturation.

The protein belongs to the peptidase A25 family. In terms of assembly, homotetramer. Autoproteolytically processed. The inactive tetrameric zymogen termed p46 autoprocesses to a smaller form termed p41, which is active only during spore germination.

The enzyme catalyses Endopeptidase action with P4 Glu or Asp, P1 preferably Glu &gt; Asp, P1' hydrophobic and P2' Ala.. In terms of biological role, initiates the degradation of small, acid-soluble proteins during spore germination. The protein is Germination protease (gpr) of Bacillus subtilis (strain 168).